The following is a 350-amino-acid chain: Integrin beta-1-binding protein 2 (350 aa).

Zn(2+)-binding residues include C5, C10, C24, and H27. A CHORD 1 domain is found at 5–64 (CYNKGCGQHFDPNTNLPDSCRYHPGVPIFHDALKGWSCCRKRTVDFSEFLNIKGCTVGLH). Residues 28 to 31 (PGVP) carry the SH3-binding motif. 4 residues coordinate Zn(2+): C42, C43, C59, and H64. Positions 70 to 79 (PEVPPQPEGP) match the SH3-binding motif. The tract at residues 72–92 (VPPQPEGPATSSLQEQKPLNT) is disordered. The segment covering 80–92 (ATSSLQEQKPLNT) has biased composition (polar residues). Residues C150 and C155 each contribute to the Zn(2+) site. Residues 150-209 (CQNPGCDAVYQGPESDATPCTYHPGAPRFHEGMKSWSCCGIQTLDFGAFLAQPGCRVGRH) enclose the CHORD 2 domain. An SH2-binding motif is present at residues 159–162 (YQGP). The Zn(2+) site is built by C169 and H172. The short motif at 173 to 176 (PGAP) is the SH3-binding element. C187, C188, C204, and H209 together coordinate Zn(2+). The CS domain maps to 216–305 (PASCRHDWHQ…ADPGSWAQLE (90 aa)). An SH2-binding motif is present at residues 235 to 238 (YGQI). The tract at residues 317 to 350 (GVLLEMDEEESEDSDDDLSWTEEEDEEEEEAMGE) is disordered. Residues 321-350 (EMDEEESEDSDDDLSWTEEEDEEEEEAMGE) show a composition bias toward acidic residues.

As to quaternary structure, interacts with beta-1 integrin subunit. This interaction is regulated by divalent cations, and it occurs only in absence of calcium. Expressed in skeletal and cardiac muscles but not in other tissues. Is localized in rows flanking the Z line containing alpha-actinin.

Functionally, may play a role during maturation and/or organization of muscles cells. The polypeptide is Integrin beta-1-binding protein 2 (Itgb1bp2) (Mus musculus (Mouse)).